Consider the following 122-residue polypeptide: Large ribosomal subunit protein bL17 (122 aa).

Belongs to the bacterial ribosomal protein bL17 family. Part of the 50S ribosomal subunit. Contacts protein L32.

This chain is Large ribosomal subunit protein bL17, found in Neisseria meningitidis serogroup B (strain ATCC BAA-335 / MC58).